Here is a 434-residue protein sequence, read N- to C-terminus: 3-phosphoshikimate 1-carboxyvinyltransferase (434 aa).

3-phosphoshikimate-binding residues include Lys-15, Ser-16, and Arg-20. Position 15 (Lys-15) interacts with phosphoenolpyruvate. The phosphoenolpyruvate site is built by Gly-96 and Arg-124. 3-phosphoshikimate-binding residues include Ser-169, Gln-171, Ser-195, Asp-319, and Lys-346. Gln-171 is a phosphoenolpyruvate binding site. Asp-319 serves as the catalytic Proton acceptor. 2 residues coordinate phosphoenolpyruvate: Arg-350 and Arg-394.

Belongs to the EPSP synthase family. In terms of assembly, monomer.

Its subcellular location is the cytoplasm. It catalyses the reaction 3-phosphoshikimate + phosphoenolpyruvate = 5-O-(1-carboxyvinyl)-3-phosphoshikimate + phosphate. Its pathway is metabolic intermediate biosynthesis; chorismate biosynthesis; chorismate from D-erythrose 4-phosphate and phosphoenolpyruvate: step 6/7. In terms of biological role, catalyzes the transfer of the enolpyruvyl moiety of phosphoenolpyruvate (PEP) to the 5-hydroxyl of shikimate-3-phosphate (S3P) to produce enolpyruvyl shikimate-3-phosphate and inorganic phosphate. The polypeptide is 3-phosphoshikimate 1-carboxyvinyltransferase (Chlorobaculum parvum (strain DSM 263 / NCIMB 8327) (Chlorobium vibrioforme subsp. thiosulfatophilum)).